The primary structure comprises 574 residues: 3-hydroxy-3-methylglutaryl-coenzyme A reductase 3 (574 aa).

Residues 1 to 30 (MDVRRRPVKPLYPSEHISSGEPLKPHNQDS) are disordered. The chain crosses the membrane as a helical span at residues 41-61 (PLYLTNGLFFTMFFSVMYFLL). N78 carries an N-linked (GlcNAc...) asparagine glycan. Residues 83 to 103 (VAMVSLIASVIYLLGFFGIGF) form a helical membrane-spanning segment. The tract at residues 104–161 (VQSFVSKGNNDSWDVEDESPEQFIDRTVTPPPVRRNIPMKSVPVAEKTAQIITPFSSE) is linker. Residue N113 is glycosylated (N-linked (GlcNAc...) asparagine). The catalytic stretch occupies residues 162–574 (DDEVVIKSVV…YNRSCKDVTK (413 aa)). E256 functions as the Charge relay system in the catalytic mechanism. An N-linked (GlcNAc...) asparagine glycan is attached at N320. K388 serves as the catalytic Charge relay system. N433 carries an N-linked (GlcNAc...) asparagine glycan. Catalysis depends on D464, which acts as the Charge relay system. H562 serves as the catalytic Proton donor. N-linked (GlcNAc...) asparagine glycosylation is present at N566.

The protein belongs to the HMG-CoA reductase family. Expressed in mature petals and anthers.

Its subcellular location is the endoplasmic reticulum membrane. The catalysed reaction is (R)-mevalonate + 2 NADP(+) + CoA = (3S)-3-hydroxy-3-methylglutaryl-CoA + 2 NADPH + 2 H(+). Its pathway is metabolic intermediate biosynthesis; (R)-mevalonate biosynthesis; (R)-mevalonate from acetyl-CoA: step 3/3. Functionally, catalyzes the synthesis of mevalonate. The specific precursor of all isoprenoid compounds present in plants. This Solanum tuberosum (Potato) protein is 3-hydroxy-3-methylglutaryl-coenzyme A reductase 3 (HMG3).